The following is a 320-amino-acid chain: D-amino-acid oxidase (320 aa).

8 residues coordinate FAD: Ala13, Gly14, Val15, Thr42, Thr43, Ser44, Gly48, and Ala49. D-proline is bound by residues Tyr220 and Arg274. Positions 220 and 274 each coordinate D-serine. Residues Arg274, Gly299, Gly300, Gly302, and Thr304 each coordinate FAD. Gly300 is a D-proline binding site. Residue Gly300 participates in D-serine binding.

It belongs to the DAMOX/DASOX family. FAD serves as cofactor.

The protein localises to the cytoplasm. The protein resides in the secreted. Its subcellular location is the cell wall. The enzyme catalyses a D-alpha-amino acid + O2 + H2O = a 2-oxocarboxylate + H2O2 + NH4(+). Its function is as follows. Catalyzes the oxidative deamination of D-amino acids with broad substrate specificity. Enables the organism to utilize D-amino acids as a source of nutrients. Enables the organism to utilize glycine as a carbon source. This chain is D-amino-acid oxidase, found in Mycobacterium tuberculosis (strain ATCC 25177 / H37Ra).